Reading from the N-terminus, the 798-residue chain is METGPAPLVAPPRRHGAPAAPSPPPRGSRAGSHLVVEPGPPVTTATSAPVELVAPGEARPACVPGSSQTSASTPTTATSSTVVMLTLEASPEAAKTQEFPAPAAETGAETSVALALGTDTQKTEEVRASPVPGPGTPTRTPSRMAPGALTAKPPLAPKPGTTVASGVTARGGVGQVAGGHEAATSASAGSVPEDPSGPVTGPPGTCEAPAPTPVAVVTVTPAPEPVENFQDLGSTSSLGPGISGPRGQAPDTLSYLDSVSLMSGTLESLPDDVSSMGSDSEINGMALRKTDKYGFLGGSQYSGSLESSIPVDVARQRELKWLEMFSNWDKWLSRRFQKVKLRCRKGIPSSLRAKAWQYLSNSKELLEQNPGKFEELERAAGDPKWLDVIEKDLHRQFPFHEMFAARGGHGQQDLYRILKAYTIYRPDEGYCQAQAPVAAVLLMHMPAEQAFWCLVQICDKYLPGYYSAGLEAIQLDGEIFFALLRRVSPLAHRHLRRQRIDPVLYMTEWFMCIFARTLPWASVLRVWDMFFCEGVKIIFRVALVLLRHTLGSVEKLRSCQGMYETMEQLRNLPQQCMQEDFLVHEVTNLPVTEAWIERENAAQLKKWRETRGELQYRPSRRLHGSRAIHEERRRQQPPLGPSSSLLSLPSLKSRGSRAVGGAPSPPPPVRRASAGPVPGAVVIAEGLHPSLPSPTGNSTPLGTSKEIRRQEKERQKQEKDREKERQRQEKERERQEKERQKWEKEQEKEQQKQEKERQKLEKKGQGRKLSLRRRADGPPASHDGGDRSAAEARQDAYF.

Disordered stretches follow at residues methionine 1–serine 79, threonine 118–proline 211, and proline 225–proline 250. Residue serine 22 is modified to Phosphoserine. A compositionally biased stretch (low complexity) spans serine 66–serine 79. Serine 129 is modified (phosphoserine). At threonine 136 the chain carries Phosphothreonine. The span at threonine 136–threonine 161 shows a compositional bias: low complexity. Arginine 170 carries the omega-N-methylarginine modification. A Rab-GAP TBC domain is found at glycine 346–glycine 534. The tract at residues proline 618 to phenylalanine 798 is disordered. The segment covering proline 641–alanine 662 has biased composition (low complexity). Serine 644, serine 647, serine 650, serine 664, and serine 673 each carry phosphoserine. Residues serine 693–glycine 702 are compositionally biased toward polar residues. Residues glycine 702–leucine 769 adopt a coiled-coil conformation. 2 stretches are compositionally biased toward basic and acidic residues: residues lysine 705–glycine 764 and aspartate 783–phenylalanine 798.

The protein localises to the cytoplasm. In terms of biological role, acts as a GTPase-activating protein for RAB3A, RAB22A, RAB27A and RAB35. Does not act on RAB2A and RAB6A. In Mus musculus (Mouse), this protein is TBC1 domain family member 10B (Tbc1d10b).